The primary structure comprises 269 residues: Sulfur carrier protein FdhD (269 aa).

C111 acts as the Cysteine persulfide intermediate in catalysis.

It belongs to the FdhD family.

It is found in the cytoplasm. In terms of biological role, required for formate dehydrogenase (FDH) activity. Acts as a sulfur carrier protein that transfers sulfur from IscS to the molybdenum cofactor prior to its insertion into FDH. The sequence is that of Sulfur carrier protein FdhD from Brucella melitensis biotype 1 (strain ATCC 23456 / CCUG 17765 / NCTC 10094 / 16M).